Consider the following 153-residue polypeptide: Membrane protein FAM174B (153 aa).

Positions 1 to 27 (MSALPPQPPPPLLLLLLALLAAPAALA) are cleaved as a signal peptide. The Extracellular segment spans residues 28 to 84 (RRAESASASQPEAEHQPPPGPGNATQLGSGMAGGGSSNSSVDAVVTRISSLLRDLPT). Positions 31-67 (ESASASQPEAEHQPPPGPGNATQLGSGMAGGGSSNSS) are disordered. N-linked (GlcNAc...) asparagine glycosylation is present at asparagine 50. A helical membrane pass occupies residues 85 to 105 (LKATVIVACAFSALLIACLLL). Residues 106–153 (RVFRLGKRLKKTRKYDIITTPAERVEMAPLNEEDDEDEDSTVFDIKYR) are Cytoplasmic-facing.

This sequence belongs to the FAM174 family.

It localises to the cell membrane. It is found in the golgi apparatus. Its function is as follows. Essential for Golgi structural integrity. The protein is Membrane protein FAM174B (Fam174b) of Mus musculus (Mouse).